We begin with the raw amino-acid sequence, 93 residues long: Alpha-defensin 1 (93 aa).

The N-terminal stretch at Met1–Ala19 is a signal peptide. The propeptide occupies Asp20–Ser58. Residues Asn24–Leu54 are disordered. 3 cysteine pairs are disulfide-bonded: Cys64-Cys92, Cys66-Cys81, and Cys71-Cys91.

This sequence belongs to the alpha-defensin family. Paneth cells of the small bowel.

The protein localises to the secreted. Probably contributes to the antimicrobial barrier function of the small bowel mucosa. Has antibacterial activity against attenuated mutants of S.typhimurium. The sequence is that of Alpha-defensin 1 (Defa1) from Mus musculus (Mouse).